We begin with the raw amino-acid sequence, 24 residues long: Allergen Lip b 1 (24 aa).

The sequence is that of Allergen Lip b 1 from Liposcelis bostrychophila (Booklouse).